Here is a 569-residue protein sequence, read N- to C-terminus: Laccase-6 (569 aa).

Positions 1–29 are cleaved as a signal peptide; sequence MTSSAVPSLFRLSFLLFTLQVMNIGRIGA. 2 Plastocyanin-like domains span residues 37–153 and 163–315; these read KVQT…PKAS and NEHT…YIGA. N-linked (GlcNAc...) asparagine glycosylation is present at Asn83. Cu cation is bound by residues His87, His89, His132, and His134. N-linked (GlcNAc...) asparagine glycosylation is found at Asn208, Asn303, Asn319, Asn392, Asn438, and Asn444. The Plastocyanin-like 3 domain occupies 417–553; sequence DFPTTPEKAY…STMFIVKNGK (137 aa). His472, His475, His477, His532, Cys533, His534, His538, and Met543 together coordinate Cu cation.

The protein belongs to the multicopper oxidase family. Cu cation serves as cofactor. In terms of tissue distribution, predominantly expressed in the inflorescence stem, but not in siliques.

The protein resides in the secreted. It localises to the extracellular space. The protein localises to the apoplast. It catalyses the reaction 4 hydroquinone + O2 = 4 benzosemiquinone + 2 H2O. In terms of biological role, lignin degradation and detoxification of lignin-derived products. The polypeptide is Laccase-6 (LAC6) (Arabidopsis thaliana (Mouse-ear cress)).